We begin with the raw amino-acid sequence, 331 residues long: Major ferric iron-binding protein (331 aa).

Positions 1-22 (MKTSIRYALLAAALTAATPALA) are cleaved as a signal peptide. Positions 31, 79, 217, and 218 each coordinate Fe cation.

The protein belongs to the bacterial solute-binding protein 1 family.

The protein localises to the periplasm. In terms of biological role, this protein may be a central component in the iron-acquisition system. The chain is Major ferric iron-binding protein (fbpA) from Neisseria meningitidis serogroup A / serotype 4A (strain DSM 15465 / Z2491).